The chain runs to 941 residues: PHD finger protein 14 (941 aa).

The tract at residues 22–295 is disordered; sequence DYDSSDDSDF…LSQSKSNEDS (274 aa). Residues Ser26 and Ser29 each carry the phosphoserine modification. Over residues 36-47 the composition is skewed to low complexity; that stretch reads ASDSEGSGNGSE. A compositionally biased stretch (acidic residues) spans 60–72; the sequence is DSEENILEEELNE. 3 stretches are compositionally biased toward basic and acidic residues: residues 74–85, 94–109, and 116–132; these read IQVKEEQLKNST, QLIK…NGER, and KEKE…EKAT. A Phosphoserine modification is found at Ser84. The span at 133 to 166 shows a compositional bias: low complexity; the sequence is VSDSAAASAAGTTPATSPPAVTSPSVPTTTTTTT. Phosphoserine is present on Ser189. 2 stretches are compositionally biased toward acidic residues: residues 194–205 and 226–249; these read NAMDDYDSEDDN and DGDN…EGND. Tyr199 is modified (phosphotyrosine). At Ser201 the chain carries Phosphoserine. Thr280 carries the phosphothreonine modification. A compositionally biased stretch (polar residues) spans 281-290; sequence NDSLTLSQSK. A phosphoserine mark is found at Ser283, Ser287, Ser291, Ser295, and Ser301. The PHD-type 1 zinc finger occupies 312-373; the sequence is ILICCVCLGD…PWFCDACKCG (62 aa). Residues Cys315, Cys318, Cys332, Cys335, His340, and Cys343 each coordinate Zn(2+). Position 352 is a phosphoserine (Ser352). Residues Cys367, Cys370, Cys378, Cys381, His398, Cys401, Cys434, Cys437, Cys451, Cys456, His461, Cys464, Cys488, and His491 each coordinate Zn(2+). The C2HC pre-PHD-type zinc-finger motif lies at 375-408; it reads SPSCELCPNQDGIFKETDAGRWVHIVCALYVPGV. A PHD-type 2 zinc finger spans residues 432 to 492; the sequence is KECSFCEDPR…PFFAYCKQHA (61 aa). Ser523 bears the Phosphoserine mark. The stretch at 623–671 forms a coiled coil; the sequence is MIQIQENMAEQKNIKDKLENEQEKLHVEYNKLCESLEELQNLNGKLRSE. The PHD-type 3 zinc finger occupies 718 to 772; that stretch reads LYSCGICKKNHDQHLLLLCDTCKLHYHLGCLDPPLTRMPRKTKNSYWQCSECDQA. Positions 721, 724, 736, 739, 744, 747, 766, and 769 each coordinate Zn(2+). A phosphoserine mark is found at Ser774, Ser775, and Ser828. Positions 804 to 855 are disordered; it reads VPQDVPPEPKKIPIRNTRTRGRKRSFVPEEEKHEERVPRERRQRQSVLQKKP. Positions 829–843 are enriched in basic and acidic residues; sequence FVPEEEKHEERVPRE. The PHD-type 4 zinc-finger motif lies at 861–914; that stretch reads RTECSTCKGTGDNENLVRCDECRLCYHFGCLDPPLKKSPKQTGYGWICQECDSS. Zn(2+) contacts are provided by Cys864, Cys867, Cys879, Cys882, His887, Cys890, Cys908, and Cys911. Residues 912 to 941 form a disordered region; that stretch reads DSSSSKEDENEAEKKNASQELSMEQKTPKK. The span at 915–928 shows a compositional bias: basic and acidic residues; that stretch reads SSKEDENEAEKKNA. The span at 930–941 shows a compositional bias: polar residues; sequence QELSMEQKTPKK.

As to expression, high levels detected in testis, lung and spleen and low levels in muscle, heart, intestine and kidney (at protein level). Widely expressed in adult with increased levels in intestine, colon and lung.

The protein localises to the nucleus. Its subcellular location is the chromosome. It is found in the cytoplasm. Its function is as follows. Histone-binding protein. Binds preferentially to unmodified histone H3 but can also bind to a lesser extent to histone H3 trimethylated at 'Lys-9' (H3K9me3) as well as to histone H3 monomethylated at 'Lys-27' (H3K27ac) and trimethylated at 'Lys-27' (H3K27me3). Represses PDGFRA expression, thus playing a role in regulation of mesenchymal cell proliferation. Suppresses the expression of CDKN1A/p21 by reducing the level of trimethylation of histone H3 'Lys-4', leading to enhanced proliferation of germinal center B cells. The protein is PHD finger protein 14 (Phf14) of Mus musculus (Mouse).